The primary structure comprises 231 residues: UPF0758 protein pc1765 (231 aa).

Positions 107–229 (LIEHSSHAYQ…YVSFKDQNLL (123 aa)) constitute an MPN domain. Residues His-178, His-180, and Asp-191 each coordinate Zn(2+). A JAMM motif motif is present at residues 178-191 (HNHPSGDPMPSNQD).

This sequence belongs to the UPF0758 family.

This Protochlamydia amoebophila (strain UWE25) protein is UPF0758 protein pc1765.